We begin with the raw amino-acid sequence, 94 residues long: ESAT-6-like protein EsxI (94 aa).

Belongs to the WXG100 family. ESAT-6 subfamily.

Its subcellular location is the secreted. This Mycobacterium tuberculosis (strain ATCC 25618 / H37Rv) protein is ESAT-6-like protein EsxI.